The chain runs to 187 residues: MANTPEPLTTEAAQVVSETDLGAAKLLEPSALWLEPYQWVSVAMLVLIAIMLWKKVPSLVTGGLDNKIAEIKAQLDEAKALRAEAEKLRDEYTAKIANAEKDAEAMMENARHEADAILEKAEADSKALVERRKKMAEDKISAAERDAVDEVRATAAAAAAAASRKLIAEKHDAEADRKLADEVIAEL.

The helical transmembrane segment at 36-53 threads the bilayer; it reads PYQWVSVAMLVLIAIMLW.

It belongs to the ATPase B chain family. F-type ATPases have 2 components, F(1) - the catalytic core - and F(0) - the membrane proton channel. F(1) has five subunits: alpha(3), beta(3), gamma(1), delta(1), epsilon(1). F(0) has four main subunits: a(1), b(2) and c(10-14). The alpha and beta chains form an alternating ring which encloses part of the gamma chain. F(1) is attached to F(0) by a central stalk formed by the gamma and epsilon chains, while a peripheral stalk is formed by the delta and b chains.

Its subcellular location is the cell inner membrane. Its function is as follows. F(1)F(0) ATP synthase produces ATP from ADP in the presence of a proton or sodium gradient. F-type ATPases consist of two structural domains, F(1) containing the extramembraneous catalytic core and F(0) containing the membrane proton channel, linked together by a central stalk and a peripheral stalk. During catalysis, ATP synthesis in the catalytic domain of F(1) is coupled via a rotary mechanism of the central stalk subunits to proton translocation. Component of the F(0) channel, it forms part of the peripheral stalk, linking F(1) to F(0). This chain is ATP synthase subunit b, found in Erythrobacter litoralis (strain HTCC2594).